Reading from the N-terminus, the 287-residue chain is rRNA adenine N-6-methyltransferase (287 aa).

The span at 1–13 (MKKKNHKYRGKKL) shows a compositional bias: basic residues. The segment at 1–21 (MKKKNHKYRGKKLNRGESPNF) is disordered. The S-adenosyl-L-methionine site is built by His25, Met27, Gly52, Glu73, Asp98, and Asn114.

Belongs to the class I-like SAM-binding methyltransferase superfamily. rRNA adenine N(6)-methyltransferase family.

Its function is as follows. Involved in erythromycin resistance. The protein is rRNA adenine N-6-methyltransferase (ermD) of Bacillus licheniformis.